Reading from the N-terminus, the 541-residue chain is CTP synthase (541 aa).

The interval Met-1–Val-271 is amidoligase domain. Ser-19 provides a ligand contact to CTP. UTP is bound at residue Ser-19. ATP is bound by residues Ser-20–Leu-25 and Asp-77. Asp-77 and Glu-145 together coordinate Mg(2+). CTP is bound by residues Asp-152–Glu-154, Lys-192–Gln-197, and Lys-228. UTP is bound by residues Lys-192–Gln-197 and Lys-228. In terms of domain architecture, Glutamine amidotransferase type-1 spans Val-296–Ala-537. Gly-355 provides a ligand contact to L-glutamine. The active-site Nucleophile; for glutamine hydrolysis is Cys-382. L-glutamine-binding positions include Leu-383–Gln-386, Glu-406, and Arg-465. Catalysis depends on residues His-510 and Glu-512.

It belongs to the CTP synthase family. In terms of assembly, homotetramer.

The enzyme catalyses UTP + L-glutamine + ATP + H2O = CTP + L-glutamate + ADP + phosphate + 2 H(+). It catalyses the reaction L-glutamine + H2O = L-glutamate + NH4(+). The catalysed reaction is UTP + NH4(+) + ATP = CTP + ADP + phosphate + 2 H(+). It functions in the pathway pyrimidine metabolism; CTP biosynthesis via de novo pathway; CTP from UDP: step 2/2. Allosterically activated by GTP, when glutamine is the substrate; GTP has no effect on the reaction when ammonia is the substrate. The allosteric effector GTP functions by stabilizing the protein conformation that binds the tetrahedral intermediate(s) formed during glutamine hydrolysis. Inhibited by the product CTP, via allosteric rather than competitive inhibition. Functionally, catalyzes the ATP-dependent amination of UTP to CTP with either L-glutamine or ammonia as the source of nitrogen. Regulates intracellular CTP levels through interactions with the four ribonucleotide triphosphates. The chain is CTP synthase from Anaplasma phagocytophilum (strain HZ).